A 110-amino-acid polypeptide reads, in one-letter code: Large ribosomal subunit protein uL22 (110 aa).

This sequence belongs to the universal ribosomal protein uL22 family. Part of the 50S ribosomal subunit.

Functionally, this protein binds specifically to 23S rRNA; its binding is stimulated by other ribosomal proteins, e.g. L4, L17, and L20. It is important during the early stages of 50S assembly. It makes multiple contacts with different domains of the 23S rRNA in the assembled 50S subunit and ribosome. The globular domain of the protein is located near the polypeptide exit tunnel on the outside of the subunit, while an extended beta-hairpin is found that lines the wall of the exit tunnel in the center of the 70S ribosome. The protein is Large ribosomal subunit protein uL22 of Exiguobacterium sibiricum (strain DSM 17290 / CCUG 55495 / CIP 109462 / JCM 13490 / 255-15).